Consider the following 364-residue polypeptide: Valine dehydrogenase (364 aa).

Lysine 91 is a catalytic residue. 191 to 197 provides a ligand contact to NAD(+); the sequence is GVGKVGH.

The protein belongs to the Glu/Leu/Phe/Val dehydrogenases family. Homodimer.

Its subcellular location is the cytoplasm. It catalyses the reaction L-valine + NAD(+) + H2O = 3-methyl-2-oxobutanoate + NH4(+) + NADH + H(+). The protein operates within amino-acid degradation; L-valine degradation. Its activity is regulated as follows. Repressed in minimal medium by the presence of glucose and NH4(+), glycerol and NH4(+), or glycerol and asparagine. Functionally, oxidative deamination of branched-chain amino acids. Oxidizes L-valine and L-alpha-aminobutyric acid efficiently, and L-isoleucine and L-leucine less efficiently. Does not act on D-valine. The catabolism of L-valine is the major source of fatty acid precursors for macrolide biosynthesis and a vital source of antibiotic precursors. Uses NAD; no activity was found with NADP. The sequence is that of Valine dehydrogenase (vdh) from Streptomyces coelicolor (strain ATCC BAA-471 / A3(2) / M145).